The following is a 320-amino-acid chain: 4-hydroxy-3-methylbut-2-enyl diphosphate reductase (320 aa).

Cysteine 12 provides a ligand contact to [4Fe-4S] cluster. Positions 41 and 74 each coordinate (2E)-4-hydroxy-3-methylbut-2-enyl diphosphate. Positions 41 and 74 each coordinate dimethylallyl diphosphate. Positions 41 and 74 each coordinate isopentenyl diphosphate. Residue cysteine 96 participates in [4Fe-4S] cluster binding. Position 124 (histidine 124) interacts with (2E)-4-hydroxy-3-methylbut-2-enyl diphosphate. Histidine 124 contributes to the dimethylallyl diphosphate binding site. Residue histidine 124 participates in isopentenyl diphosphate binding. The Proton donor role is filled by glutamate 126. Threonine 167 is a (2E)-4-hydroxy-3-methylbut-2-enyl diphosphate binding site. Cysteine 197 is a [4Fe-4S] cluster binding site. The (2E)-4-hydroxy-3-methylbut-2-enyl diphosphate site is built by serine 225, serine 226, asparagine 227, and serine 269. 4 residues coordinate dimethylallyl diphosphate: serine 225, serine 226, asparagine 227, and serine 269. 4 residues coordinate isopentenyl diphosphate: serine 225, serine 226, asparagine 227, and serine 269.

Belongs to the IspH family. [4Fe-4S] cluster serves as cofactor.

It carries out the reaction isopentenyl diphosphate + 2 oxidized [2Fe-2S]-[ferredoxin] + H2O = (2E)-4-hydroxy-3-methylbut-2-enyl diphosphate + 2 reduced [2Fe-2S]-[ferredoxin] + 2 H(+). It catalyses the reaction dimethylallyl diphosphate + 2 oxidized [2Fe-2S]-[ferredoxin] + H2O = (2E)-4-hydroxy-3-methylbut-2-enyl diphosphate + 2 reduced [2Fe-2S]-[ferredoxin] + 2 H(+). It participates in isoprenoid biosynthesis; dimethylallyl diphosphate biosynthesis; dimethylallyl diphosphate from (2E)-4-hydroxy-3-methylbutenyl diphosphate: step 1/1. The protein operates within isoprenoid biosynthesis; isopentenyl diphosphate biosynthesis via DXP pathway; isopentenyl diphosphate from 1-deoxy-D-xylulose 5-phosphate: step 6/6. Functionally, catalyzes the conversion of 1-hydroxy-2-methyl-2-(E)-butenyl 4-diphosphate (HMBPP) into a mixture of isopentenyl diphosphate (IPP) and dimethylallyl diphosphate (DMAPP). Acts in the terminal step of the DOXP/MEP pathway for isoprenoid precursor biosynthesis. In Francisella tularensis subsp. novicida (strain U112), this protein is 4-hydroxy-3-methylbut-2-enyl diphosphate reductase.